The following is a 129-amino-acid chain: M-zodatoxin-Lt8i (129 aa).

A signal peptide spans 1-20 (MKYFVVALALVAAFACIAES). The propeptide occupies 21–60 (KPAESEHELAEVEEENELADLEDAVWLEHLADLSDLEEAR).

The protein belongs to the cationic peptide 06 (cytoinsectotoxin) family. Expressed by the venom gland.

The protein resides in the secreted. Insecticidal, cytolytic and antimicrobial peptide. Forms voltage-dependent, ion-permeable channels in membranes. At high concentration causes cell membrane lysis. The protein is M-zodatoxin-Lt8i (cit 1-6) of Lachesana tarabaevi (Spider).